Reading from the N-terminus, the 85-residue chain is Small ribosomal subunit protein bS20 (85 aa).

The disordered stretch occupies residues 1 to 22 (MANIKSAIKRAKLSEERRAHNA).

The protein belongs to the bacterial ribosomal protein bS20 family.

Its function is as follows. Binds directly to 16S ribosomal RNA. The sequence is that of Small ribosomal subunit protein bS20 from Bacillus cytotoxicus (strain DSM 22905 / CIP 110041 / 391-98 / NVH 391-98).